Consider the following 283-residue polypeptide: MTAQIIDGNLLSQQLRKDVAVRAAALTAKGKQPGLAVILVGADPASQVYVRNKVKACEDNGLYSLLEKYDADMTEAALLARIAALNADPKIHGILVQMPLPKHIDSNKVIEAISPRKDVDGYSVLSAGELLTGLPGFRPCTPYGCMKLIESTGTKLAGKHAVVIGRSNTVGKPMALLLLQANATVTICHSGTADLAYHTRQADVVVAATGRRNTLTAEMIKPGAIVIDVGINRDDNGKLCGDVDFANAKEVASYITPVPGGVGPMTITMLLVNTIEAAERETN.

Residues 165–167, Ser190, and Ile231 contribute to the NADP(+) site; that span reads GRS.

This sequence belongs to the tetrahydrofolate dehydrogenase/cyclohydrolase family. As to quaternary structure, homodimer.

It catalyses the reaction (6R)-5,10-methylene-5,6,7,8-tetrahydrofolate + NADP(+) = (6R)-5,10-methenyltetrahydrofolate + NADPH. The catalysed reaction is (6R)-5,10-methenyltetrahydrofolate + H2O = (6R)-10-formyltetrahydrofolate + H(+). Its pathway is one-carbon metabolism; tetrahydrofolate interconversion. Functionally, catalyzes the oxidation of 5,10-methylenetetrahydrofolate to 5,10-methenyltetrahydrofolate and then the hydrolysis of 5,10-methenyltetrahydrofolate to 10-formyltetrahydrofolate. The chain is Bifunctional protein FolD from Janthinobacterium sp. (strain Marseille) (Minibacterium massiliensis).